The primary structure comprises 251 residues: Ubiquinone/menaquinone biosynthesis C-methyltransferase UbiE (251 aa).

S-adenosyl-L-methionine is bound by residues Thr-74, Asp-95, 123–124 (NA), and Ser-140.

It belongs to the class I-like SAM-binding methyltransferase superfamily. MenG/UbiE family.

It catalyses the reaction a 2-demethylmenaquinol + S-adenosyl-L-methionine = a menaquinol + S-adenosyl-L-homocysteine + H(+). It carries out the reaction a 2-methoxy-6-(all-trans-polyprenyl)benzene-1,4-diol + S-adenosyl-L-methionine = a 5-methoxy-2-methyl-3-(all-trans-polyprenyl)benzene-1,4-diol + S-adenosyl-L-homocysteine + H(+). Its pathway is quinol/quinone metabolism; menaquinone biosynthesis; menaquinol from 1,4-dihydroxy-2-naphthoate: step 2/2. It participates in cofactor biosynthesis; ubiquinone biosynthesis. Methyltransferase required for the conversion of demethylmenaquinol (DMKH2) to menaquinol (MKH2) and the conversion of 2-polyprenyl-6-methoxy-1,4-benzoquinol (DDMQH2) to 2-polyprenyl-3-methyl-6-methoxy-1,4-benzoquinol (DMQH2). The protein is Ubiquinone/menaquinone biosynthesis C-methyltransferase UbiE of Serratia proteamaculans (strain 568).